We begin with the raw amino-acid sequence, 117 residues long: Nascent polypeptide-associated complex protein (117 aa).

The NAC-A/B domain occupies 9–77 (PKQLKQMQRA…ARECDLEAEV (69 aa)).

This sequence belongs to the NAC-alpha family. Homodimer. Interacts with the ribosome. Binds ribosomal RNA.

Contacts the emerging nascent chain on the ribosome. The sequence is that of Nascent polypeptide-associated complex protein from Methanothermobacter marburgensis (strain ATCC BAA-927 / DSM 2133 / JCM 14651 / NBRC 100331 / OCM 82 / Marburg) (Methanobacterium thermoautotrophicum).